The chain runs to 526 residues: Seipin-2 (526 aa).

A disordered region spans residues 33 to 77 (PIRSNSHQPSSLLRRRKSAHRRDLISSDIETEPSSSSDGFDVGEK). Low complexity predominate over residues 58 to 70 (SSDIETEPSSSSD). 4 consecutive transmembrane segments (helical) span residues 195-215 (SLLT…FDPF), 224-243 (FLMA…MNPF), 258-278 (FGWG…LLVS), and 483-503 (LFVW…LVCC).

It belongs to the seipin family. As to expression, expressed in seeds, seedlings, leaves, stems and roots. Not detected in flowers.

The protein localises to the endoplasmic reticulum membrane. Functionally, involved in lipid metabolism and lipid droplet (LD) morphology, number, and size. Supports the formation of small-sized LDs and modulates triacylglycerol accumulation. Induces probably a reorganization of the endoplasmic reticulum into LD-forming domains. The chain is Seipin-2 from Arabidopsis thaliana (Mouse-ear cress).